A 361-amino-acid chain; its full sequence is Phosphoserine aminotransferase (361 aa).

L-glutamate contacts are provided by Ser-9 and Arg-42. Residues 76–77 (AR), Trp-103, Thr-153, Asp-173, and Gln-196 each bind pyridoxal 5'-phosphate. Lys-197 carries the N6-(pyridoxal phosphate)lysine modification. 238–239 (NT) contacts pyridoxal 5'-phosphate.

Belongs to the class-V pyridoxal-phosphate-dependent aminotransferase family. SerC subfamily. In terms of assembly, homodimer. Requires pyridoxal 5'-phosphate as cofactor.

Its subcellular location is the cytoplasm. It catalyses the reaction O-phospho-L-serine + 2-oxoglutarate = 3-phosphooxypyruvate + L-glutamate. The catalysed reaction is 4-(phosphooxy)-L-threonine + 2-oxoglutarate = (R)-3-hydroxy-2-oxo-4-phosphooxybutanoate + L-glutamate. The protein operates within amino-acid biosynthesis; L-serine biosynthesis; L-serine from 3-phospho-D-glycerate: step 2/3. It functions in the pathway cofactor biosynthesis; pyridoxine 5'-phosphate biosynthesis; pyridoxine 5'-phosphate from D-erythrose 4-phosphate: step 3/5. In terms of biological role, catalyzes the reversible conversion of 3-phosphohydroxypyruvate to phosphoserine and of 3-hydroxy-2-oxo-4-phosphonooxybutanoate to phosphohydroxythreonine. The sequence is that of Phosphoserine aminotransferase from Wigglesworthia glossinidia brevipalpis.